Consider the following 206-residue polypeptide: Probable GTP-binding protein EngB (206 aa).

One can recognise an EngB-type G domain in the interval 7–195 (DCDEVVLLGR…EEALQAIFSD (189 aa)). GTP contacts are provided by residues 15–22 (GRSNVGKS), 41–45 (GVTRS), 60–63 (DLPG), 140–143 (NKID), and 175–177 (ISA). Residues serine 22 and threonine 43 each coordinate Mg(2+).

The protein belongs to the TRAFAC class TrmE-Era-EngA-EngB-Septin-like GTPase superfamily. EngB GTPase family. Mg(2+) serves as cofactor.

Functionally, necessary for normal cell division and for the maintenance of normal septation. The protein is Probable GTP-binding protein EngB of Haloquadratum walsbyi (strain DSM 16790 / HBSQ001).